A 132-amino-acid chain; its full sequence is Nickel-responsive regulator (132 aa).

Ni(2+) is bound by residues H76, H87, H89, and C95.

The protein belongs to the transcriptional regulatory CopG/NikR family. As to quaternary structure, homotetramer. It depends on Ni(2+) as a cofactor.

In terms of biological role, transcriptional repressor of the nikABCDE operon. Is active in the presence of excessive concentrations of intracellular nickel. This chain is Nickel-responsive regulator, found in Klebsiella pneumoniae (strain 342).